The primary structure comprises 358 residues: RNA demethylase ALKBH5 (358 aa).

The interval 1 to 50 (MSATYTDLREKLQSLYRDSPKEVRKRKQPTSDTEEEEAASEPEEEEEARK) is disordered. The segment covering 7-22 (DLREKLQSLYRDSPKE) has biased composition (basic and acidic residues). The segment covering 32 to 46 (DTEEEEAASEPEEEE) has biased composition (acidic residues). The active site involves Tyr105. 2-oxoglutarate is bound by residues Asn159, Tyr161, His170, His232, and Arg243. Residues Cys196 and Cys233 are joined by a disulfide bond. 2 disordered regions span residues 259 to 312 (EMKS…RRSV) and 334 to 358 (DYVDTYTETGEDDGSPVRKVKMRRH). The span at 262–278 (SLSSSYQPERLQGSNRQ) shows a compositional bias: polar residues. Over residues 279–288 (HILKPKRSHR) the composition is skewed to basic residues. Residues 289 to 310 (KADPDAAHRPRILEMDKEENRR) show a composition bias toward basic and acidic residues.

It belongs to the alkB family. As to quaternary structure, monomer. Fe(2+) serves as cofactor.

Its subcellular location is the nucleus speckle. It carries out the reaction an N(6)-methyladenosine in mRNA + 2-oxoglutarate + O2 = an adenosine in mRNA + formaldehyde + succinate + CO2. Functionally, dioxygenase that specifically demethylates N(6)-methyladenosine (m6A) RNA, the most prevalent internal modification of messenger RNA (mRNA) in higher eukaryotes. Demethylates RNA by oxidative demethylation, which requires molecular oxygen, alpha-ketoglutarate and iron. Demethylation of m6A mRNA affects mRNA processing, translation and export. The protein is RNA demethylase ALKBH5 (alkbh5) of Xenopus tropicalis (Western clawed frog).